Here is a 644-residue protein sequence, read N- to C-terminus: Exoribonuclease 2 (644 aa).

Residues 189 to 516 enclose the RNB domain; sequence REDLTALDFV…NHRLLKAVIK (328 aa). Residues 561 to 643 enclose the S1 motif domain; it reads DTRFAAEIVD…ETRSIIARPV (83 aa).

The protein belongs to the RNR ribonuclease family. RNase II subfamily.

The protein localises to the cytoplasm. It catalyses the reaction Exonucleolytic cleavage in the 3'- to 5'-direction to yield nucleoside 5'-phosphates.. Its function is as follows. Involved in mRNA degradation. Hydrolyzes single-stranded polyribonucleotides processively in the 3' to 5' direction. The protein is Exoribonuclease 2 of Escherichia coli O127:H6 (strain E2348/69 / EPEC).